We begin with the raw amino-acid sequence, 225 residues long: Lipoprotein CseA (225 aa).

A signal peptide spans 1–36 (MRGLTDGRTPRGTRRTTQAASTAVAVFVALGVSLAG). The N-palmitoyl cysteine moiety is linked to residue C37. Residue C37 is the site of S-diacylglycerol cysteine attachment. Disordered regions lie at residues 40–77 (GGTGARDEGPAHADAVGGAGSASPAPAAKASPSKAPDR) and 205–225 (THNDYSKAAGNAPTPAPEPDS). Low complexity predominate over residues 60–73 (SASPAPAAKASPSK).

The protein localises to the cell membrane. May be involved in the stabilization of the cell envelope or may interact with the sensor protein CseC to modulate its activity, in response to cell envelope stress. In Streptomyces coelicolor (strain ATCC BAA-471 / A3(2) / M145), this protein is Lipoprotein CseA (cseA).